The primary structure comprises 553 residues: Formate--tetrahydrofolate ligase (553 aa).

Position 65-72 (65-72 (TPAGEGKS)) interacts with ATP.

The protein belongs to the formate--tetrahydrofolate ligase family.

It catalyses the reaction (6S)-5,6,7,8-tetrahydrofolate + formate + ATP = (6R)-10-formyltetrahydrofolate + ADP + phosphate. It participates in one-carbon metabolism; tetrahydrofolate interconversion. The protein is Formate--tetrahydrofolate ligase of Brachyspira hyodysenteriae (strain ATCC 49526 / WA1).